Reading from the N-terminus, the 425-residue chain is Serine--tRNA ligase (425 aa).

230–232 contacts L-serine; the sequence is TAE. 261–263 provides a ligand contact to ATP; that stretch reads RSE. Glu-284 contributes to the L-serine binding site. An ATP-binding site is contributed by 348-351; that stretch reads EISS. Ser-384 is a binding site for L-serine.

It belongs to the class-II aminoacyl-tRNA synthetase family. Type-1 seryl-tRNA synthetase subfamily. In terms of assembly, homodimer. The tRNA molecule binds across the dimer.

It localises to the cytoplasm. It catalyses the reaction tRNA(Ser) + L-serine + ATP = L-seryl-tRNA(Ser) + AMP + diphosphate + H(+). The enzyme catalyses tRNA(Sec) + L-serine + ATP = L-seryl-tRNA(Sec) + AMP + diphosphate + H(+). It functions in the pathway aminoacyl-tRNA biosynthesis; selenocysteinyl-tRNA(Sec) biosynthesis; L-seryl-tRNA(Sec) from L-serine and tRNA(Sec): step 1/1. Functionally, catalyzes the attachment of serine to tRNA(Ser). Is also able to aminoacylate tRNA(Sec) with serine, to form the misacylated tRNA L-seryl-tRNA(Sec), which will be further converted into selenocysteinyl-tRNA(Sec). The polypeptide is Serine--tRNA ligase (Streptococcus pyogenes serotype M2 (strain MGAS10270)).